The following is a 107-amino-acid chain: Inner membrane protein YiaW (107 aa).

The Cytoplasmic portion of the chain corresponds to 1 to 6 (MFLDYF). A helical transmembrane segment spans residues 7–29 (ALGVLIFVFLVIFYGIIILHDIP). At 30-43 (YLIAKKRNHPHADA) the chain is on the periplasmic side. The helical transmembrane segment at 44 to 66 (IHVAGWVSLFTLHVIWPFLWIWA) threads the bilayer. Topologically, residues 67 to 107 (TLYRPERGWGMQSHDSSVMQLQQRIAGLEKQLADIKSSSAE) are cytoplasmic.

This sequence to E.coli YibI.

Its subcellular location is the cell inner membrane. The protein is Inner membrane protein YiaW (yiaW) of Escherichia coli O157:H7.